The following is a 185-amino-acid chain: ATP-dependent protease subunit HslV (185 aa).

Thr-12 is an active-site residue. Positions 168, 171, and 174 each coordinate Na(+).

This sequence belongs to the peptidase T1B family. HslV subfamily. As to quaternary structure, a double ring-shaped homohexamer of HslV is capped on each side by a ring-shaped HslU homohexamer. The assembly of the HslU/HslV complex is dependent on binding of ATP.

Its subcellular location is the cytoplasm. The enzyme catalyses ATP-dependent cleavage of peptide bonds with broad specificity.. With respect to regulation, allosterically activated by HslU binding. Protease subunit of a proteasome-like degradation complex believed to be a general protein degrading machinery. The chain is ATP-dependent protease subunit HslV from Cereibacter sphaeroides (strain KD131 / KCTC 12085) (Rhodobacter sphaeroides).